Here is a 229-residue protein sequence, read N- to C-terminus: Choline-phosphate cytidylyltransferase (229 aa).

The CDP-choline site is built by Leu6, Ala8, Gly9, Tyr80, Asn82, Ser85, and Ala101. Asp102 is a Mg(2+) binding site. Tyr185 is a CDP-choline binding site. Mg(2+)-binding residues include Glu211 and Asp213.

The protein belongs to the LicC/PntC cytidylyltransferase family. In terms of assembly, monomer. Forms dimers in LicC-CDP-Cho-Mg(2+) crystals, but the monomer is probably the biologically functional unit. Requires Mg(2+) as cofactor.

The enzyme catalyses phosphocholine + CTP + H(+) = CDP-choline + diphosphate. It functions in the pathway cell wall biogenesis; teichoic acid biosynthesis. It participates in cell wall biogenesis; lipoteichoic acid biosynthesis. Its activity is regulated as follows. Mg(2+) in slight excess of CTP gives maximal activity. Strongly inhibited by Ca(2+) and several other metal ions, such as Cd(2+), Co(2+), Cu(2+), Mn(2+), Ni(2+), Zn(2+) and Fe(2+). Also inhibited by Mg(2+) at high concentrations. CDP-Cho is a competitive inhibitor with respect to CTP, whereas diphosphate is a mixed-type inhibitor with respect to CTP. In terms of biological role, cytidylyltransferase involved in the biosynthesis of the phosphocholine containing cell wall constituents, teichoic acid and lipoteichoic acid, which are essential for cell separation and pathogenesis. Catalyzes the activation of phosphocholine (P-Cho) to CDP-choline (CDP-Cho). Can also use phosphoethanolamine and 2-aminoethylphosphonate, with much lower efficiency. Shows lower activity with dCTP, weak activity with ATP and no activity with GTP, TTP, UTP, dATP, dGTP and dTTP. The polypeptide is Choline-phosphate cytidylyltransferase (Streptococcus pneumoniae (strain ATCC BAA-255 / R6)).